The sequence spans 156 residues: uncharacterized protein (156 aa).

The protein to L.lactis TrpF C-terminal region.

This is an uncharacterized protein from Bacillus subtilis (strain 168).